Consider the following 215-residue polypeptide: Phosphatidylserine decarboxylase proenzyme (215 aa).

Catalysis depends on Ser-184, which acts as the Schiff-base intermediate with substrate; via pyruvic acid. Position 184 is a pyruvic acid (Ser); by autocatalysis (Ser-184).

The protein belongs to the phosphatidylserine decarboxylase family. PSD-A subfamily. Heterodimer of a large membrane-associated beta subunit and a small pyruvoyl-containing alpha subunit. Requires pyruvate as cofactor. Is synthesized initially as an inactive proenzyme. Formation of the active enzyme involves a self-maturation process in which the active site pyruvoyl group is generated from an internal serine residue via an autocatalytic post-translational modification. Two non-identical subunits are generated from the proenzyme in this reaction, and the pyruvate is formed at the N-terminus of the alpha chain, which is derived from the carboxyl end of the proenzyme. The post-translation cleavage follows an unusual pathway, termed non-hydrolytic serinolysis, in which the side chain hydroxyl group of the serine supplies its oxygen atom to form the C-terminus of the beta chain, while the remainder of the serine residue undergoes an oxidative deamination to produce ammonia and the pyruvoyl prosthetic group on the alpha chain.

It localises to the cell membrane. It carries out the reaction a 1,2-diacyl-sn-glycero-3-phospho-L-serine + H(+) = a 1,2-diacyl-sn-glycero-3-phosphoethanolamine + CO2. It functions in the pathway phospholipid metabolism; phosphatidylethanolamine biosynthesis; phosphatidylethanolamine from CDP-diacylglycerol: step 2/2. Functionally, catalyzes the formation of phosphatidylethanolamine (PtdEtn) from phosphatidylserine (PtdSer). The polypeptide is Phosphatidylserine decarboxylase proenzyme (Ralstonia pickettii (strain 12J)).